Here is a 108-residue protein sequence, read N- to C-terminus: Protein YcgL (108 aa).

The YcgL domain occupies Met-12–Leu-96.

This chain is Protein YcgL, found in Escherichia coli O9:H4 (strain HS).